A 748-amino-acid chain; its full sequence is Transcription factor hmgR (748 aa).

Positions 24–59 form a DNA-binding region, zn(2)-C6 fungal-type; that stretch reads CISCRQRKAKCDLGTGPDGLPLGPPCAKCRREQKPC. 2 disordered regions span residues 108 to 142 and 661 to 683; these read SQED…QIDL and REST…DEHA.

It is found in the nucleus. Its function is as follows. Transcription factor; part of the L-tyrosine degradation gene cluster that mediates the biosynthesis of the brownish pigment pyomelanin as an alternative melanin. Acts as a transcriptional activator for the genes of the tyrosine degradation cluster. In Aspergillus fumigatus (strain ATCC MYA-4609 / CBS 101355 / FGSC A1100 / Af293) (Neosartorya fumigata), this protein is Transcription factor hmgR.